Reading from the N-terminus, the 252-residue chain is F-box/SPRY domain-containing protein 1 (252 aa).

The F-box domain maps to 1–48; sequence MVDPLCNYNVLEAIFSYLELNDLYRCSQVCKSWYHFLNDENSDVWRWH. One can recognise a B30.2/SPRY domain in the interval 58–250; that stretch reads VKSDLLASVS…VSMVYLGTPL (193 aa).

It belongs to the FBXO45/Fsn family. Component of an E3 ubiquitin ligase complex composed of hiw and Fsn.

It is found in the synapse. Its pathway is protein modification; protein ubiquitination. Functionally, required in the presynaptic motoneuron to down-regulate the levels of wnd and restrain synaptic terminal growth at the neuromuscular junction (NMJ). The protein is F-box/SPRY domain-containing protein 1 of Drosophila virilis (Fruit fly).